A 150-amino-acid chain; its full sequence is Large ribosomal subunit protein uL13 (150 aa).

The interval T129–Q150 is disordered. The span at Q139–Q150 shows a compositional bias: polar residues.

This sequence belongs to the universal ribosomal protein uL13 family. Part of the 50S ribosomal subunit.

Functionally, this protein is one of the early assembly proteins of the 50S ribosomal subunit, although it is not seen to bind rRNA by itself. It is important during the early stages of 50S assembly. The sequence is that of Large ribosomal subunit protein uL13 from Synechococcus sp. (strain CC9605).